A 994-amino-acid chain; its full sequence is Phosphoenolpyruvate carboxylase (994 aa).

The disordered stretch occupies residues 1-66; that stretch reads MKSSGSARAT…QGRTREDKDR (66 aa). 2 stretches are compositionally biased toward low complexity: residues 14–25 and 41–54; these read AVSSSSAPAHAE and AAAR…AASA. Active-site residues include H204 and K646.

Belongs to the PEPCase type 1 family. It depends on Mg(2+) as a cofactor.

The enzyme catalyses oxaloacetate + phosphate = phosphoenolpyruvate + hydrogencarbonate. Its function is as follows. Forms oxaloacetate, a four-carbon dicarboxylic acid source for the tricarboxylic acid cycle. This Burkholderia pseudomallei (strain 668) protein is Phosphoenolpyruvate carboxylase.